Reading from the N-terminus, the 304-residue chain is Putative integrase/recombinase HI_1414 (304 aa).

The region spanning 30 to 109 (TLFSDVIKRY…TIGHIFKIAL (80 aa)) is the Core-binding (CB) domain. The region spanning 131-304 (PRTQRVTEEN…DMAEVAELLD (174 aa)) is the Tyr recombinase domain. Residues R174, K199, H256, R259, and H281 contribute to the active site. Residue Y291 is the O-(3'-phospho-DNA)-tyrosine intermediate of the active site.

This sequence belongs to the 'phage' integrase family.

The polypeptide is Putative integrase/recombinase HI_1414 (Haemophilus influenzae (strain ATCC 51907 / DSM 11121 / KW20 / Rd)).